The following is a 158-amino-acid chain: E3 ubiquitin ligase complex SCF subunit sconC (158 aa).

Residues 100-158 (ILAANYLDIKALLDVGCKTVANMIKGKSPEEIRKTFNIQNDFTPEEEDQIRRENEWAEE) are interaction with the F-box domain of F-box proteins.

Belongs to the SKP1 family. Component of the SCF (SKP1-CUL1-F-box protein) E3 ubiquitin ligase complexes.

The protein operates within protein modification; protein ubiquitination. In terms of biological role, essential component of the SCF (SKP1-CUL1-F-box protein) E3 ubiquitin ligase complexes, which mediate the ubiquitination and subsequent proteasomal degradation of target proteins. Controls sulfur metabolite repression, probably by mediating the inactivation or degradation of the metR transcription factor. This Aspergillus fumigatus (strain CBS 144.89 / FGSC A1163 / CEA10) (Neosartorya fumigata) protein is E3 ubiquitin ligase complex SCF subunit sconC (sconC).